The primary structure comprises 830 residues: Leucine--tRNA ligase (830 aa).

Positions P42 to H52 match the 'HIGH' region motif. Positions K585 to S589 match the 'KMSKS' region motif. K588 lines the ATP pocket.

The protein belongs to the class-I aminoacyl-tRNA synthetase family.

It localises to the cytoplasm. It carries out the reaction tRNA(Leu) + L-leucine + ATP = L-leucyl-tRNA(Leu) + AMP + diphosphate. The chain is Leucine--tRNA ligase from Halothermothrix orenii (strain H 168 / OCM 544 / DSM 9562).